A 501-amino-acid chain; its full sequence is Glycerol kinase 1 (501 aa).

T16 is a binding site for ADP. Residues T16, T17, and S18 each contribute to the ATP site. A sn-glycerol 3-phosphate-binding site is contributed by T16. ADP is bound at residue R20. Residues R84, E85, Y135, and D242 each coordinate sn-glycerol 3-phosphate. Glycerol is bound by residues R84, E85, Y135, D242, and Q243. Positions 264 and 307 each coordinate ADP. Residues T264, G307, Q311, and G408 each contribute to the ATP site. G408 contributes to the ADP binding site.

The protein belongs to the FGGY kinase family.

The enzyme catalyses glycerol + ATP = sn-glycerol 3-phosphate + ADP + H(+). Its pathway is polyol metabolism; glycerol degradation via glycerol kinase pathway; sn-glycerol 3-phosphate from glycerol: step 1/1. In terms of biological role, key enzyme in the regulation of glycerol uptake and metabolism. Catalyzes the phosphorylation of glycerol to yield sn-glycerol 3-phosphate. The protein is Glycerol kinase 1 of Saccharolobus solfataricus (strain ATCC 35092 / DSM 1617 / JCM 11322 / P2) (Sulfolobus solfataricus).